A 147-amino-acid polypeptide reads, in one-letter code: Transthyretin (147 aa).

An N-terminal signal peptide occupies residues 1-20 (MASRRLLLLCLAGLVLVTEA). Position 30 is a sulfocysteine (Cys-30). Lys-35 is a binding site for L-thyroxine. 4-carboxyglutamate is present on Glu-62. Glu-74 provides a ligand contact to L-thyroxine. Asn-118 carries an N-linked (GlcNAc...) asparagine glycan. An L-thyroxine-binding site is contributed by Ser-137.

It belongs to the transthyretin family. In terms of assembly, homotetramer. Dimer of dimers. In the homotetramer, subunits assemble around a central channel that can accommodate two ligand molecules. Interacts with RBP4. Post-translationally, sulfonation of the reactive cysteine Cys-30 enhances the stability of the native conformation of TTR, avoiding misassembly of the protein leading to amyloid formation. In terms of tissue distribution, detected in serum (at protein level). Detected in liver.

The protein resides in the secreted. Functionally, thyroid hormone-binding protein. Probably transports thyroxine from the bloodstream to the brain. This chain is Transthyretin (TTR), found in Sorex araneus (Eurasian common shrew).